The sequence spans 228 residues: 2-C-methyl-D-erythritol 4-phosphate cytidylyltransferase (228 aa).

Belongs to the IspD/TarI cytidylyltransferase family. IspD subfamily.

The enzyme catalyses 2-C-methyl-D-erythritol 4-phosphate + CTP + H(+) = 4-CDP-2-C-methyl-D-erythritol + diphosphate. It functions in the pathway isoprenoid biosynthesis; isopentenyl diphosphate biosynthesis via DXP pathway; isopentenyl diphosphate from 1-deoxy-D-xylulose 5-phosphate: step 2/6. Its function is as follows. Catalyzes the formation of 4-diphosphocytidyl-2-C-methyl-D-erythritol from CTP and 2-C-methyl-D-erythritol 4-phosphate (MEP). The sequence is that of 2-C-methyl-D-erythritol 4-phosphate cytidylyltransferase from Mannheimia succiniciproducens (strain KCTC 0769BP / MBEL55E).